Consider the following 205-residue polypeptide: Proteasome subunit beta (205 aa).

A propeptide spans 1–9 (MNQTENMEG) (removed in mature form; by autocatalysis). Threonine 10 serves as the catalytic Nucleophile.

The protein belongs to the peptidase T1B family. As to quaternary structure, the 20S proteasome core is composed of 14 alpha and 14 beta subunits that assemble into four stacked heptameric rings, resulting in a barrel-shaped structure. The two inner rings, each composed of seven catalytic beta subunits, are sandwiched by two outer rings, each composed of seven alpha subunits. The catalytic chamber with the active sites is on the inside of the barrel. Has a gated structure, the ends of the cylinder being occluded by the N-termini of the alpha-subunits. Is capped at one or both ends by the proteasome regulatory ATPase, PAN.

It localises to the cytoplasm. The catalysed reaction is Cleavage of peptide bonds with very broad specificity.. Its activity is regulated as follows. The formation of the proteasomal ATPase PAN-20S proteasome complex, via the docking of the C-termini of PAN into the intersubunit pockets in the alpha-rings, triggers opening of the gate for substrate entry. Interconversion between the open-gate and close-gate conformations leads to a dynamic regulation of the 20S proteasome proteolysis activity. In terms of biological role, component of the proteasome core, a large protease complex with broad specificity involved in protein degradation. This Methanosphaera stadtmanae (strain ATCC 43021 / DSM 3091 / JCM 11832 / MCB-3) protein is Proteasome subunit beta.